We begin with the raw amino-acid sequence, 649 residues long: Stress-70 protein, mitochondrial (649 aa).

A mitochondrion-targeting transit peptide spans methionine 1–tyrosine 46. The segment at methionine 1–valine 432 is interaction with NFS1. Positions 63 and 64 each coordinate ADP. Residues threonine 63–aspartate 431 are nucleotide-binding domain (NBD). Lysine 76 carries the N6-acetyllysine modification. Threonine 87 is subject to Phosphothreonine. Lysine 135 and lysine 138 each carry N6-acetyllysine; alternate. Residues lysine 135 and lysine 138 each carry the N6-succinyllysine; alternate modification. The residue at position 143 (lysine 143) is an N6-acetyllysine. At lysine 206 the chain carries N6-acetyllysine; alternate. Lysine 206 carries the N6-succinyllysine; alternate modification. Residue lysine 206 is modified to N6-malonyllysine; alternate. Lysine 234 and lysine 288 each carry N6-acetyllysine. At lysine 300 the chain carries N6-acetyllysine; alternate. An N6-succinyllysine; alternate modification is found at lysine 300. Residues glutamate 313, lysine 316, and serine 320 each contribute to the ADP site. Lysine 368 is subject to N6-succinyllysine. Glycine 388 and arginine 391 together coordinate ADP. N6-succinyllysine is present on lysine 394. The residue at position 408 (serine 408) is a Phosphoserine. Residues valine 432–threonine 441 form an interdomain linker region. 3 positions are modified to N6-acetyllysine; alternate: lysine 565, lysine 598, and lysine 638. N6-succinyllysine; alternate occurs at positions 565, 598, and 638.

Belongs to the heat shock protein 70 family. In terms of assembly, interacts strongly with the intermediate form of FXN and weakly with its mature form. Interacts with HSCB. Associates with the mitochondrial contact site and cristae organizing system (MICOS) complex, composed of at least MICOS10/MIC10, CHCHD3/MIC19, CHCHD6/MIC25, APOOL/MIC27, IMMT/MIC60, APOO/MIC23/MIC26 and QIL1/MIC13. This complex was also known under the names MINOS or MitOS complex. The MICOS complex associates with mitochondrial outer membrane proteins SAMM50, MTX1, MTX2 and DNAJC11, mitochondrial inner membrane protein TMEM11 and with HSPA9. Interacts with DNLZ, the interaction is required to prevent self-aggregation. Interacts with TESPA1. Interacts with PDPN. Interacts with NFU1, NFS1 and ISCU. Interacts with TP53; the interaction promotes TP53 degradation. Interacts (via SBD domain) with UBXN2A; the interaction with UBXN2A inhibits HSPA9/MOT-2 interaction with and degradation of TP53, thereby promotes TP53 translocation to the nucleus. Interacts with ITPR1 AND VDAC1; this interaction couples ITPR1 to VDAC1. Component of the TIM23 mitochondrial inner membrane pre-sequence translocase complex.

It localises to the mitochondrion. The protein resides in the nucleus. Its subcellular location is the nucleolus. It is found in the cytoplasm. The protein localises to the mitochondrion matrix. It carries out the reaction ATP + H2O = ADP + phosphate + H(+). The chaperone activity is regulated by ATP-induced allosteric coupling of the nucleotide-binding (NBD) and substrate-binding (SBD) domains. ATP binding in the NBD leads to a conformational change in the NBD, which is transferred through the interdomain linker (IDL) to the substrate-binding domain (SBD). This elicits a reduced substrate affinity and a faster substrate exchange rate. Upon hydrolysis of ATP to ADP, the protein undergoes a conformational change that increases its affinity for substrate proteins. It cycles through repeated phases of ATP hydrolysis and nucleotide exchange, facilitating repeated cycles of substrate binding and release. Functions in collaboration with co-chaperones. Functions with the co-chaperone, DNLZ, to maintain solubility and regulate ATP hydrolysis. Nucleotide exchange factors, GRPEL1 and GRPEL2, accelerate nucleotide exchange. In terms of biological role, mitochondrial chaperone that plays a key role in mitochondrial protein import, folding, and assembly. Plays an essential role in the protein quality control system, the correct folding of proteins, the re-folding of misfolded proteins, and the targeting of proteins for subsequent degradation. These processes are achieved through cycles of ATP binding, ATP hydrolysis, and ADP release, mediated by co-chaperones. In mitochondria, it associates with the TIM (translocase of the inner membrane) protein complex to assist in the import and folding of mitochondrial proteins. Plays an important role in mitochondrial iron-sulfur cluster (ISC) biogenesis, interacts with and stabilizes ISC cluster assembly proteins FXN, NFU1, NFS1 and ISCU. Regulates erythropoiesis via stabilization of ISC assembly. Regulates mitochondrial calcium-dependent apoptosis by coupling two calcium channels, ITPR1 and VDAC1, at the mitochondria-associated endoplasmic reticulum (ER) membrane to facilitate calcium transport from the ER lumen to the mitochondria intermembrane space, providing calcium for the downstream calcium channel MCU, which releases it into the mitochondrial matrix. Although primarily located in the mitochondria, it is also found in other cellular compartments. In the cytosol, it associates with proteins involved in signaling, apoptosis, or senescence. It may play a role in cell cycle regulation via its interaction with and promotion of degradation of TP53. May play a role in the control of cell proliferation and cellular aging. Protects against reactive oxygen species (ROS). Extracellular HSPA9 plays a cytoprotective role by preventing cell lysis following immune attack by the membrane attack complex by disrupting formation of the complex. This Canis lupus familiaris (Dog) protein is Stress-70 protein, mitochondrial.